The following is a 255-amino-acid chain: Pyrroloquinoline-quinone synthase (255 aa).

Belongs to the PqqC family.

It catalyses the reaction 6-(2-amino-2-carboxyethyl)-7,8-dioxo-1,2,3,4,7,8-hexahydroquinoline-2,4-dicarboxylate + 3 O2 = pyrroloquinoline quinone + 2 H2O2 + 2 H2O + H(+). It functions in the pathway cofactor biosynthesis; pyrroloquinoline quinone biosynthesis. Its function is as follows. Ring cyclization and eight-electron oxidation of 3a-(2-amino-2-carboxyethyl)-4,5-dioxo-4,5,6,7,8,9-hexahydroquinoline-7,9-dicarboxylic-acid to PQQ. The polypeptide is Pyrroloquinoline-quinone synthase (Cereibacter sphaeroides (strain ATCC 17023 / DSM 158 / JCM 6121 / CCUG 31486 / LMG 2827 / NBRC 12203 / NCIMB 8253 / ATH 2.4.1.) (Rhodobacter sphaeroides)).